The chain runs to 292 residues: 4-diphosphocytidyl-2-C-methyl-D-erythritol kinase (292 aa).

K10 is an active-site residue. 100–110 (PIGSGLGGGSS) lines the ATP pocket. D142 is a catalytic residue.

It belongs to the GHMP kinase family. IspE subfamily. In terms of assembly, homodimer.

The enzyme catalyses 4-CDP-2-C-methyl-D-erythritol + ATP = 4-CDP-2-C-methyl-D-erythritol 2-phosphate + ADP + H(+). The protein operates within isoprenoid biosynthesis; isopentenyl diphosphate biosynthesis via DXP pathway; isopentenyl diphosphate from 1-deoxy-D-xylulose 5-phosphate: step 3/6. Catalyzes the phosphorylation of the position 2 hydroxy group of 4-diphosphocytidyl-2C-methyl-D-erythritol. The polypeptide is 4-diphosphocytidyl-2-C-methyl-D-erythritol kinase (Buchnera aphidicola subsp. Schizaphis graminum (strain Sg)).